A 154-amino-acid polypeptide reads, in one-letter code: Myoglobin (154 aa).

The Globin domain maps to 2 to 148 (GLSDGEWQLV…FRKDMASNYK (147 aa)). Ser4 is subject to Phosphoserine. Residue His65 participates in nitrite binding. His65 serves as a coordination point for O2. Thr68 is subject to Phosphothreonine. Heme b is bound at residue His94.

The protein belongs to the globin family. Monomeric.

The protein localises to the cytoplasm. It is found in the sarcoplasm. The catalysed reaction is Fe(III)-heme b-[protein] + nitric oxide + H2O = Fe(II)-heme b-[protein] + nitrite + 2 H(+). The enzyme catalyses H2O2 + AH2 = A + 2 H2O. In terms of biological role, monomeric heme protein which primary function is to store oxygen and facilitate its diffusion within muscle tissues. Reversibly binds oxygen through a pentacoordinated heme iron and enables its timely and efficient release as needed during periods of heightened demand. Depending on the oxidative conditions of tissues and cells, and in addition to its ability to bind oxygen, it also has a nitrite reductase activity whereby it regulates the production of bioactive nitric oxide. Under stress conditions, like hypoxia and anoxia, it also protects cells against reactive oxygen species thanks to its pseudoperoxidase activity. In Pan troglodytes (Chimpanzee), this protein is Myoglobin (MB).